The sequence spans 226 residues: MGITGMIYIVTMVFSLIVLILSSSTVGYDYFQFTQQYQPAVCNSKPTPCKDPPDKLFTVHGLWPSNLNGPHPENCTNATVNPHRIKNIQAQLKIIWPNVLDRTNHVGFWNKQWIKHGSCGYPAIMNDTHYFQTVINMYITQKQNVSEILSKAKIEPLGIQRPLVHIENAIRNSTNNKKPKFKCQKNSGVTELVEVGLCSDGSLTQFRNCPHPPPGSPYLCPADVKY.

The first 27 residues, 1-27 (MGITGMIYIVTMVFSLIVLILSSSTVG), serve as a signal peptide directing secretion. Gln36 is an RNA binding site. Cys42 and Cys49 are oxidised to a cystine. His60 provides a ligand contact to RNA. Residue His60 is the Proton donor of the active site. N-linked (GlcNAc...) asparagine; alternate glycans are attached at residues Asn74 and Asn77. A disulfide bridge connects residues Cys75 and Cys119. RNA-binding positions include 98-99 (NV), Phe108, 111-112 (KQ), and 115-116 (KH). Gln112 is a catalytic residue. His116 functions as the Proton acceptor in the catalytic mechanism. Asn126, Asn144, and Asn172 each carry an N-linked (GlcNAc...) asparagine glycan. Disulfide bonds link Cys183–Cys220 and Cys198–Cys209.

This sequence belongs to the RNase T2 family. In terms of processing, the N-glycans attached at Asn-74 and Asn-77 consist of either monosaccharide (GlcNAc) or disaccharide (GlcNAc-GlcNAc) that could not be distinguished. The N-glycan at Asn-144 contains mannose and xylose, and at Asn-126 contains mannose, xylose and fucose. The N-glycan at Asn-172 consists of disaccharide (GlcNAc-GlcNAc).

It catalyses the reaction a ribonucleotidyl-ribonucleotide-RNA + H2O = a 3'-end 3'-phospho-ribonucleotide-RNA + a 5'-end dephospho-ribonucleoside-RNA + H(+). Functionally, self-incompatibility (SI) is the inherited ability of a flowering plant to prevent self-fertilization by discriminating between self and non-self pollen during pollination. In many species, self-incompatibility is controlled by the single, multiallelic locus S. The sequence is that of Ribonuclease S-7 from Pyrus pyrifolia (Chinese pear).